Here is a 133-residue protein sequence, read N- to C-terminus: Ubiquitin-like FUBI-ribosomal protein eS30 fusion protein (133 aa).

Residues 84-110 (GKVRGQTPKVAKQEKKKKKTGRAKRRM) are disordered. Positions 97-110 (EKKKKKTGRAKRRM) are enriched in basic residues. Lys125 is subject to N6-succinyllysine.

It in the N-terminal section; belongs to the ubiquitin family. This sequence in the C-terminal section; belongs to the eukaryotic ribosomal protein eS30 family. As to quaternary structure, component of the 40S subunit of the ribosome. In terms of processing, FUBI is cleaved from ribosomal protein S30 by the deubiquitinase USP36 before the assembly of ribosomal protein S30 into pre-40S ribosomal particles. FUBI removal from ribosomal protein S30 is a crucial event for the final maturation of pre-40S particles.

It is found in the nucleus. The protein resides in the cytoplasm. In terms of biological role, may have pro-apoptotic activity. Functionally, component of the 40S subunit of the ribosome. Contributes to the assembly and function of 40S ribosomal subunits. The sequence is that of Ubiquitin-like FUBI-ribosomal protein eS30 fusion protein (Fau) from Mus musculus (Mouse).